The chain runs to 549 residues: MKRVLTALAATLPFAANAADAISGAVERQPTNWQAIIMFLIFVVFTLGITYWASKRVRSRNDYYTAGGNITGFQNGLAIAGDYMSAASFLGISALVFTSGYDGLIYSLGFLVGWPIILFLIAERLRNLGRYTFADVASYRLKQGPIRILSACGSLVVVALYLIAQMVGAGKLIELLFGLNYHIAVVLVGVLMMMYVLFGGMLATTWVQIIKAVLLLFGASFMAFMVMKHVGFSFNNLFSEAMAVHPKGVDIMKPGGLVKDPISALSLGLGLMFGTAGLPHILMRFFTVSDAREARKSVFYATGFMGYFYILTFIIGFGAIMLVGANPEYKDAAGHLIGGNNMAAVHLANAVGGNLFLGFISAVAFATILAVVAGLTLAGASAVSHDLYANVFKKGATEREELRVSKITVLILGVIAIILGVLFENQNIAFMVGLAFAIAASCNFPIILLSMYWSKLTTRGAMLGGWLGLITAVVLMILGPTIWVQILGHEKAIFPYEYPALFSISVAFLGIWFFSATDNSAEGARERELFRAQFIRSQTGFGVEQGRAH.

13 consecutive transmembrane segments (helical) span residues 33–53, 77–97, 103–123, 148–168, 183–203, 206–226, 262–282, 303–323, 355–375, 404–424, 428–448, 464–484, and 493–513; these read WQAI…TYWA, LAIA…ALVF, GLIY…LIAE, ILSA…QMVG, IAVV…GMLA, WVQI…AFMV, ISAL…PHIL, GFMG…IMLV, LFLG…VAGL, VSKI…VLFE, IAFM…PIIL, GGWL…TIWV, and IFPY…GIWF.

Belongs to the sodium:solute symporter (SSF) (TC 2.A.21) family.

The protein localises to the cell inner membrane. Functionally, transports acetate. The polypeptide is Cation/acetate symporter ActP (Escherichia coli O6:K15:H31 (strain 536 / UPEC)).